The chain runs to 487 residues: Solute carrier family 22 member 15-like (487 aa).

A helical membrane pass occupies residues 23–43 (FLTLLQIYVACQSMLIVLVGA). N-linked (GlcNAc...) asparagine glycosylation is present at asparagine 70. The next 11 membrane-spanning stretches (helical) occupy residues 90 to 110 (LASSLFFAGLLIGNVFFGPLS), 117 to 137 (PVYLSGLFFDIIFGYFTALAP), 141 to 161 (VFAVSRFFVGVMNGGMALVSF), 178 to 198 (SLTNLIFAVGIAFYALLGFYI), 203 to 223 (TLAFVANSPGIFFLLLSFVLP), 286 to 306 (ILLMYIWYVCSLVYYGLTLNA), 315 to 335 (LNVALYGLVEVPAFPLCLYFI), 345 to 365 (ATAGFLVFAGFACIFTIFVPE), 374 to 394 (TVLALFGKLSVSAAFNVVYIY), 408 to 428 (LGVCAMACRFGGILSPFIPAM), and 435 to 455 (MPFVAFGISGISAGILSLLLP).

Belongs to the major facilitator (TC 2.A.1) superfamily. Organic cation transporter (TC 2.A.1.19) family.

The protein resides in the membrane. In terms of biological role, probably transports organic cations. This Xenopus laevis (African clawed frog) protein is Solute carrier family 22 member 15-like (slc22a15b).